The chain runs to 154 residues: Transcriptional repressor NrdR (154 aa).

Residues 3–34 (CPFCRHPDSRVVDSRETDEGQAIRRRRSCPEC) fold into a zinc finger. The ATP-cone domain maps to 46–136 (LAVVKRSGVT…VYRSFSSAED (91 aa)).

It belongs to the NrdR family. It depends on Zn(2+) as a cofactor.

Negatively regulates transcription of bacterial ribonucleotide reductase nrd genes and operons by binding to NrdR-boxes. This is Transcriptional repressor NrdR from Mycolicibacterium gilvum (strain PYR-GCK) (Mycobacterium gilvum (strain PYR-GCK)).